The sequence spans 82 residues: P2Y purinoceptor 2 (82 aa).

Residues 1–25 (LPLSYGVVCVLGLCLNVVALYIFLC) traverse the membrane as a helical segment. Over 26–35 (RLKTWNASTT) the chain is Cytoplasmic. Residues 36–56 (YMFHLAVSDSLYAASLPLLVY) traverse the membrane as a helical segment. Over 57-75 (YYAQGDHWPFSTVLCKLVR) the chain is Extracellular. A helical membrane pass occupies residues 76–82 (FLFYTNL).

The protein belongs to the G-protein coupled receptor 1 family. As to expression, expressed in brain, heart, stria vascularis and vestibular labyrinth.

It localises to the cell membrane. Functionally, receptor for ATP and UTP coupled to G-proteins that activate a phosphatidylinositol-calcium second messenger system. Not activated by UDP. This Meriones unguiculatus (Mongolian jird) protein is P2Y purinoceptor 2 (P2RY2).